Consider the following 201-residue polypeptide: Pyridoxal 5'-phosphate synthase subunit PdxT (201 aa).

49–51 contributes to the L-glutamine binding site; that stretch reads GES. Cys81 acts as the Nucleophile in catalysis. L-glutamine-binding positions include Arg110 and 139–140; that span reads IR. Active-site charge relay system residues include His175 and Glu177.

The protein belongs to the glutaminase PdxT/SNO family. As to quaternary structure, in the presence of PdxS, forms a dodecamer of heterodimers. Only shows activity in the heterodimer.

It catalyses the reaction aldehydo-D-ribose 5-phosphate + D-glyceraldehyde 3-phosphate + L-glutamine = pyridoxal 5'-phosphate + L-glutamate + phosphate + 3 H2O + H(+). The catalysed reaction is L-glutamine + H2O = L-glutamate + NH4(+). It participates in cofactor biosynthesis; pyridoxal 5'-phosphate biosynthesis. Functionally, catalyzes the hydrolysis of glutamine to glutamate and ammonia as part of the biosynthesis of pyridoxal 5'-phosphate. The resulting ammonia molecule is channeled to the active site of PdxS. In Streptomyces avermitilis (strain ATCC 31267 / DSM 46492 / JCM 5070 / NBRC 14893 / NCIMB 12804 / NRRL 8165 / MA-4680), this protein is Pyridoxal 5'-phosphate synthase subunit PdxT.